The chain runs to 265 residues: 5'-nucleotidase SurE (265 aa).

The a divalent metal cation site is built by aspartate 8, aspartate 9, serine 39, and asparagine 96.

This sequence belongs to the SurE nucleotidase family. A divalent metal cation is required as a cofactor.

The protein localises to the cytoplasm. The catalysed reaction is a ribonucleoside 5'-phosphate + H2O = a ribonucleoside + phosphate. Nucleotidase that shows phosphatase activity on nucleoside 5'-monophosphates. The sequence is that of 5'-nucleotidase SurE from Rubrobacter xylanophilus (strain DSM 9941 / JCM 11954 / NBRC 16129 / PRD-1).